Consider the following 320-residue polypeptide: Protein MRH1 (320 aa).

The Extracellular portion of the chain corresponds to 1-34 (MSTFETLIKRGGNEAIKINPPTGADFHITSRGSD). The helical transmembrane segment at 35 to 55 (WFWTCFCCYLLFGLILTFLMF) threads the bilayer. At 56–62 (RKPVNDR) the chain is on the cytoplasmic side. A helical transmembrane segment spans residues 63 to 83 (FFYLTGIAPNFFMCIAYFTMA). Topologically, residues 84–116 (SNLGWIPVKAKYNHVQTSTQKEHPGYRQIFYSR) are extracellular. The helical transmembrane segment at 117–137 (FVGWFLALPWPIIQICMLAGT) threads the bilayer. The Cytoplasmic segment spans residues 138–141 (PFWQ). The chain crosses the membrane as a helical span at residues 142–162 (MAFNVCITEFFTVCWLIAACV). The Extracellular segment spans residues 163–167 (HSTYK). The chain crosses the membrane as a helical span at residues 168 to 188 (WGYYTIGLGAAIVVSISVMTT). Residues 189 to 204 (SYNLVKQRDNDIRLTF) are Cytoplasmic-facing. Residues 205–225 (LVFFSIIMFLWIIAYPTCFGI) form a helical membrane-spanning segment. Residues 226–238 (TDGGNVLQPDSAG) lie on the Extracellular side of the membrane. Residues 239 to 259 (IFYGIIDLILMCFIPTLLVPI) form a helical membrane-spanning segment. The Cytoplasmic portion of the chain corresponds to 260 to 320 (ANHFGADKLG…KSKKSKKSEE (61 aa)). A disordered region spans residues 285–320 (APVASPRPAATPNLSKDKKKKSKKSKKSKKSKKSEE). At serine 289 the chain carries Phosphoserine. Residue threonine 295 is modified to Phosphothreonine. Serine 299 carries the phosphoserine modification. Basic residues predominate over residues 301–320 (DKKKKSKKSKKSKKSKKSEE).

The protein belongs to the archaeal/bacterial/fungal opsin family.

The protein resides in the cell membrane. It localises to the mitochondrion. It is found in the bud. This chain is Protein MRH1 (MRH1), found in Saccharomyces cerevisiae (strain ATCC 204508 / S288c) (Baker's yeast).